The primary structure comprises 358 residues: DNA replication and repair protein RecF (358 aa).

Gly-30–Thr-37 lines the ATP pocket.

The protein belongs to the RecF family.

It is found in the cytoplasm. In terms of biological role, the RecF protein is involved in DNA metabolism; it is required for DNA replication and normal SOS inducibility. RecF binds preferentially to single-stranded, linear DNA. It also seems to bind ATP. This Actinobacillus succinogenes (strain ATCC 55618 / DSM 22257 / CCUG 43843 / 130Z) protein is DNA replication and repair protein RecF.